The chain runs to 289 residues: D-alanine aminotransferase (289 aa).

Residue Y31 coordinates substrate. R50 serves as a coordination point for pyridoxal 5'-phosphate. Positions 99 and 101 each coordinate substrate. N6-(pyridoxal phosphate)lysine is present on K147. Residue E179 coordinates pyridoxal 5'-phosphate.

Belongs to the class-IV pyridoxal-phosphate-dependent aminotransferase family. As to quaternary structure, homodimer. It depends on pyridoxal 5'-phosphate as a cofactor.

The catalysed reaction is D-alanine + 2-oxoglutarate = D-glutamate + pyruvate. Its function is as follows. Acts on the D-isomers of alanine, leucine, aspartate, glutamate, aminobutyrate, norvaline and asparagine. The enzyme transfers an amino group from a substrate D-amino acid to the pyridoxal phosphate cofactor to form pyridoxamine and an alpha-keto acid in the first half-reaction. The second half-reaction is the reverse of the first, transferring the amino group from the pyridoxamine to a second alpha-keto acid to form the product D-amino acid via a ping-pong mechanism. This is an important process in the formation of D-alanine and D-glutamate, which are essential bacterial cell wall components. The chain is D-alanine aminotransferase (dat) from Listeria monocytogenes serotype 1/2a (strain 10403S).